The primary structure comprises 124 residues: Small ribosomal subunit protein uS11 (124 aa).

It belongs to the universal ribosomal protein uS11 family. Part of the 30S ribosomal subunit. Interacts with proteins S7 and S18. Binds to IF-3.

In terms of biological role, located on the platform of the 30S subunit, it bridges several disparate RNA helices of the 16S rRNA. Forms part of the Shine-Dalgarno cleft in the 70S ribosome. This is Small ribosomal subunit protein uS11 from Anaplasma marginale (strain St. Maries).